The following is a 502-amino-acid chain: Lysine--tRNA ligase (502 aa).

Mg(2+) is bound by residues glutamate 398 and glutamate 405.

The protein belongs to the class-II aminoacyl-tRNA synthetase family. As to quaternary structure, homodimer. Mg(2+) serves as cofactor.

The protein resides in the cytoplasm. It carries out the reaction tRNA(Lys) + L-lysine + ATP = L-lysyl-tRNA(Lys) + AMP + diphosphate. This Thermosipho melanesiensis (strain DSM 12029 / CIP 104789 / BI429) protein is Lysine--tRNA ligase.